The chain runs to 155 residues: Small ribosomal subunit protein uS7c (155 aa).

This sequence belongs to the universal ribosomal protein uS7 family. In terms of assembly, part of the 30S ribosomal subunit.

The protein localises to the plastid. It is found in the chloroplast. Its function is as follows. One of the primary rRNA binding proteins, it binds directly to 16S rRNA where it nucleates assembly of the head domain of the 30S subunit. The polypeptide is Small ribosomal subunit protein uS7c (rps7) (Allium textile (Textile onion)).